Consider the following 786-residue polypeptide: MKKRIPTLLATMIASALYSHQGLAADLASQCMLGVPSYDRPLVKGDTNDLPVTINADNAKGNYPNDAVFTGNVDIMQGNSRLQADEVQLHQKQAEGQPEPVRTVDALGNVHYDDNQVILKGPKGWANLNTKDTNVWEGDYQMVGRQGRGKADLMKQRGENRYTILENGSFTSCLPGSDTWSVVGSEVIHDREEQVAEIWNARFKVGPVPIFYSPYLQLPVGDKRRSGFLIPNAKYTTKNYFEFYLPYYWNIAPNMDATITPHYMHRRGNIMWENEFRYLTQAGAGLMELDYLPSDKVYEDDHPKEGDKHRWLFYWQHSGVMDQVWRFNVDYTKVSDSSYFNDFDSKYGSSTDGYATQKFSVGYAVQNFDATVSTKQFQVFNDQNTSSYSAEPQLDVNYYHNDLGPFDTRIYGQAVHFVNTKDNMPEATRVHLEPTINLPLSNRWGSLNTEAKLMATHYQQTNLDSYNSDPNNKNKLEDSVNRVMPQFKVDGKLIFERDMAMLAPGYTQTLEPRVQYLYVPYRDQSGIYNYDSSLLQSDYNGLFRDRTYGGLDRIASANQVTTGVTTRIYDDAAVERFNVSVGQIYYFTESRTGDDNIKWENDDKTGSLVWAGDTYWRISERWGLRSGVQYDTRLDSVATSSSSLEYRRDQDRLVQLNYRYASPEYIQATLPSYYSTAEQYKNGINQVGAVASWLIADRWSIVGAYYFDTNSSKPADQMLGLQYNSCCYAIRVGYERKLNGWDNDKQHAIYDNAIGFNIELRGLSSNYGLGTQEMLRSNILPYQSSM.

A signal peptide spans 1-24 (MKKRIPTLLATMIASALYSHQGLA). 2 disulfides stabilise this stretch: Cys31–Cys726 and Cys173–Cys727.

Belongs to the LptD family. In terms of assembly, component of the lipopolysaccharide transport and assembly complex. Interacts with LptE and LptA. In terms of processing, contains two intramolecular disulfide bonds.

Its subcellular location is the cell outer membrane. Together with LptE, is involved in the assembly of lipopolysaccharide (LPS) at the surface of the outer membrane. The sequence is that of LPS-assembly protein LptD from Salmonella choleraesuis (strain SC-B67).